Consider the following 920-residue polypeptide: Protein O-mannosyl-transferase TMTC3 (920 aa).

Residues 1 to 14 are Cytoplasmic-facing; the sequence is MLEGKMADINFKEV. A helical transmembrane segment spans residues 15–35; that stretch reads TLIVSVVAACYWNSLFCGFVF. Residues 36–94 lie on the Extracellular side of the membrane; sequence DDVSAILDNKDLHPSTPLKTLFQNDFWGTPMSEERSHKSYRPLTVLTFRLNYLLSELKP. Residues 95 to 115 form a helical membrane-spanning segment; sequence MSYHLLNTVFHAVVSVIFLKV. Residues 116-125 are Cytoplasmic-facing; that stretch reads CRLFLDKRSS. The next 2 helical transmembrane spans lie at 126–144 and 145–163; these read MIAA…AVTG and VVGR…AFLS. Over 164-171 the chain is Cytoplasmic; sequence YTKSKGPD. Residues 172 to 192 form a helical membrane-spanning segment; sequence NSIVWTPIVLTVFLVAVATLC. Topologically, residues 193–198 are extracellular; the sequence is KEQGIT. Residues 199 to 219 traverse the membrane as a helical segment; it reads VVGICCVYEVFVAQGYTLPML. Topologically, residues 220 to 236 are cytoplasmic; that stretch reads CTVAGQFLRGKGSIPLS. A helical membrane pass occupies residues 237-257; sequence MLQTLVKLIVLMLSTLLLVVV. The Extracellular segment spans residues 258–325; sequence RVQVIQSQLP…LIESFLDVRN (68 aa). Residues 326–346 form a helical membrane-spanning segment; it reads LATFAFFCFLGALGIFSLRYP. Residues 347–358 lie on the Cytoplasmic side of the membrane; the sequence is GDSSKTVLMALC. A helical membrane pass occupies residues 359 to 379; the sequence is LMALPFIPASNLFFPVGFVVA. At 380 to 381 the chain is on the extracellular side; that stretch reads ER. A helical transmembrane segment spans residues 382-402; it reads VLYVPSMGFCILVAHGWQKIS. Residues 403–409 are Cytoplasmic-facing; it reads NKSVLKK. The chain crosses the membrane as a helical span at residues 410–428; that stretch reads LSWVCLSMVILTHALKTLH. At 429 to 920 the chain is on the extracellular side; it reads RNWDWESEYT…EEIERILNGE (492 aa). TPR repeat units lie at residues 451–484, 485–518, 534–567, 568–601, 602–635, 673–706, 707–740, 742–775, and 776–809; these read AKLW…QPDD, IGAH…MPQI, NVYI…RPDF, KQAY…DRNN, ADLW…NPKH, ANGY…QPDF, RSAL…YPDH, KGLI…DPSN, and VQGK…APHE. N-linked (GlcNAc...) asparagine glycosylation occurs at Asn-499. Phosphotyrosine is present on Tyr-508. A glycan (N-linked (GlcNAc...) asparagine) is linked at Asn-546. The disordered stretch occupies residues 829 to 897; sequence VEQPLAPADK…APHKTTKDIK (69 aa). The segment covering 840 to 858 has biased composition (basic and acidic residues); sequence PGTEEREEIPSEDVKEISS. Over residues 867-880 the composition is skewed to low complexity; the sequence is KTNNNRNSKSNKQS. The span at 887–897 shows a compositional bias: basic and acidic residues; that stretch reads DAPHKTTKDIK.

Belongs to the TMTC family.

The protein localises to the membrane. It localises to the endoplasmic reticulum. It catalyses the reaction a di-trans,poly-cis-dolichyl beta-D-mannosyl phosphate + L-seryl-[protein] = 3-O-(alpha-D-mannosyl)-L-seryl-[protein] + a di-trans,poly-cis-dolichyl phosphate + H(+). The enzyme catalyses a di-trans,poly-cis-dolichyl beta-D-mannosyl phosphate + L-threonyl-[protein] = 3-O-(alpha-D-mannosyl)-L-threonyl-[protein] + a di-trans,poly-cis-dolichyl phosphate + H(+). The protein operates within protein modification; protein glycosylation. Transfers mannosyl residues to the hydroxyl group of serine or threonine residues. The 4 members of the TMTC family are O-mannosyl-transferases dedicated primarily to the cadherin superfamily, each member seems to have a distinct role in decorating the cadherin domains with O-linked mannose glycans at specific regions. Also acts as O-mannosyl-transferase on other proteins such as PDIA3. Involved in the positive regulation of proteasomal protein degradation in the endoplasmic reticulum (ER), and the control of ER stress response. This Mus musculus (Mouse) protein is Protein O-mannosyl-transferase TMTC3.